The sequence spans 65 residues: Myotoxin-1 (65 aa).

A signal peptide spans 1-22 (MKILYLLFAFLFLAFLSEPGNA). Disulfide bonds link C26–C58, C33–C52, and C40–C59.

The protein belongs to the crotamine-myotoxin family. As to quaternary structure, monomer. Expressed by the venom gland.

It localises to the secreted. Its function is as follows. Cationic peptide that possesses multiple functions. It acts as a cell-penetrating peptide (CPP), and as a potent voltage-gated potassium channel (Kv) inhibitor. It exhibits antimicrobial activities, hind limb paralysis, and severe muscle necrosis by a non-enzymatic mechanism. The polypeptide is Myotoxin-1 (Crotalus durissus terrificus (South American rattlesnake)).